The primary structure comprises 505 residues: tRNA-2-methylthio-N(6)-dimethylallyladenosine synthase (505 aa).

The region spanning 14–132 is the MTTase N-terminal domain; it reads RTYEVRTYGC…LPVLLERARV (119 aa). Residues Cys23, Cys61, Cys95, Cys169, Cys173, and Cys176 each coordinate [4Fe-4S] cluster. Residues 155-386 form the Radical SAM core domain; sequence RESAYAAWVS…ALQEEISWDE (232 aa). One can recognise a TRAM domain in the interval 388-456; that stretch reads KKQVGRTLEL…PHHLLAEGAV (69 aa).

The protein belongs to the methylthiotransferase family. MiaB subfamily. In terms of assembly, monomer. [4Fe-4S] cluster serves as cofactor.

Its subcellular location is the cytoplasm. It catalyses the reaction N(6)-dimethylallyladenosine(37) in tRNA + (sulfur carrier)-SH + AH2 + 2 S-adenosyl-L-methionine = 2-methylsulfanyl-N(6)-dimethylallyladenosine(37) in tRNA + (sulfur carrier)-H + 5'-deoxyadenosine + L-methionine + A + S-adenosyl-L-homocysteine + 2 H(+). Catalyzes the methylthiolation of N6-(dimethylallyl)adenosine (i(6)A), leading to the formation of 2-methylthio-N6-(dimethylallyl)adenosine (ms(2)i(6)A) at position 37 in tRNAs that read codons beginning with uridine. In Streptomyces coelicolor (strain ATCC BAA-471 / A3(2) / M145), this protein is tRNA-2-methylthio-N(6)-dimethylallyladenosine synthase.